An 843-amino-acid chain; its full sequence is Major vault protein alpha (843 aa).

The residue at position 2 (Ala-2) is an N-acetylalanine. MVP repeat units lie at residues 2-56 (ADLN…IPQR), 57-111 (NYCT…KVTA), 112-163 (LQVV…EEIK), 164-216 (ATII…EIVN), 217-272 (AYVL…GEVH), 273-324 (ITTL…IHNI), 325-376 (YVLT…KRES), 377-442 (IPLD…STRV), and 443-505 (VTYR…FLGP). The interval 643 to 663 (QEAAARHEAERLEQGARGRLE) is disordered. The segment covering 646-663 (AARHEAERLEQGARGRLE) has biased composition (basic and acidic residues).

In terms of assembly, the vault ribonucleoprotein particle is a huge (400 A x 670 A) cage structure of 12.9 MDa. It consists of a dimer of half-vaults, with each half-vault comprising 39 identical major vault protein (MVP) chains. Dictyostelium is one of the few organisms in which the major component is actually two proteins (alpha and beta).

The protein resides in the cytoplasm. It localises to the nucleus. Functionally, unknown, though MVP-alpha is required for normal vault structure. The polypeptide is Major vault protein alpha (mvpA) (Dictyostelium discoideum (Social amoeba)).